Reading from the N-terminus, the 226-residue chain is Isoprenyl transferase (226 aa).

The active site involves Asp12. Residue Asp12 participates in Mg(2+) binding. Substrate-binding positions include 13 to 16, Trp17, Lys25, His29, and 57 to 59; these read GNAR and SFE. Asn60 (proton acceptor) is an active-site residue. Substrate-binding positions include Trp61, Arg63, Arg174, and 180–182; that span reads RIS. Glu193 is a Mg(2+) binding site.

It belongs to the UPP synthase family. Homodimer. Requires Mg(2+) as cofactor.

Catalyzes the condensation of isopentenyl diphosphate (IPP) with allylic pyrophosphates generating different type of terpenoids. This chain is Isoprenyl transferase, found in Rickettsia prowazekii (strain Madrid E).